A 70-amino-acid chain; its full sequence is MTTIRVKDNEPFDVALRRFKRTIEKLGLLTDLRAREFYEKPTAERKRKKAAAVKRNYKRIRAMQLPKKLY.

Belongs to the bacterial ribosomal protein bS21 family.

This chain is Small ribosomal subunit protein bS21, found in Polaromonas naphthalenivorans (strain CJ2).